A 312-amino-acid polypeptide reads, in one-letter code: Malate dehydrogenase (312 aa).

Residues 7–13 and D34 contribute to the NAD(+) site; that span reads GAAGGIG. R81 and R87 together coordinate substrate. NAD(+)-binding positions include N94 and 117–119; that span reads ITN. 2 residues coordinate substrate: N119 and R153. The Proton acceptor role is filled by H177. M227 is an NAD(+) binding site.

It belongs to the LDH/MDH superfamily. MDH type 1 family. Homodimer.

It carries out the reaction (S)-malate + NAD(+) = oxaloacetate + NADH + H(+). Catalyzes the reversible oxidation of malate to oxaloacetate. The protein is Malate dehydrogenase of Shigella flexneri serotype 5b (strain 8401).